Consider the following 73-residue polypeptide: Translation initiation factor IF-1 (73 aa).

Residues 1–72 (MSKKDVIELE…SRGRIVYRKK (72 aa)) form the S1-like domain.

It belongs to the IF-1 family. As to quaternary structure, component of the 30S ribosomal translation pre-initiation complex which assembles on the 30S ribosome in the order IF-2 and IF-3, IF-1 and N-formylmethionyl-tRNA(fMet); mRNA recruitment can occur at any time during PIC assembly.

It localises to the cytoplasm. Functionally, one of the essential components for the initiation of protein synthesis. Stabilizes the binding of IF-2 and IF-3 on the 30S subunit to which N-formylmethionyl-tRNA(fMet) subsequently binds. Helps modulate mRNA selection, yielding the 30S pre-initiation complex (PIC). Upon addition of the 50S ribosomal subunit IF-1, IF-2 and IF-3 are released leaving the mature 70S translation initiation complex. The chain is Translation initiation factor IF-1 from Fusobacterium nucleatum subsp. nucleatum (strain ATCC 25586 / DSM 15643 / BCRC 10681 / CIP 101130 / JCM 8532 / KCTC 2640 / LMG 13131 / VPI 4355).